Reading from the N-terminus, the 832-residue chain is FAST kinase domain-containing protein 1, mitochondrial (832 aa).

Residues 765–825 (VAIEFLDSKA…KDAWMDYLRK (61 aa)) enclose the RAP domain.

Belongs to the FAST kinase family.

It localises to the mitochondrion. Its function is as follows. May regulate the stability of some mitochondrial mRNA species. This Xenopus laevis (African clawed frog) protein is FAST kinase domain-containing protein 1, mitochondrial (fastkd1).